A 165-amino-acid chain; its full sequence is Small ribosomal subunit protein uS5 (165 aa).

Residues 10-73 (LVEKLVAVDR…EAARRNMITV (64 aa)) form the S5 DRBM domain.

The protein belongs to the universal ribosomal protein uS5 family. Part of the 30S ribosomal subunit. Contacts proteins S4 and S8.

In terms of biological role, with S4 and S12 plays an important role in translational accuracy. Located at the back of the 30S subunit body where it stabilizes the conformation of the head with respect to the body. This Acinetobacter baumannii (strain AB307-0294) protein is Small ribosomal subunit protein uS5.